We begin with the raw amino-acid sequence, 275 residues long: Elongation factor Ts (275 aa).

Positions 80–83 are involved in Mg(2+) ion dislocation from EF-Tu; it reads TDFV.

The protein belongs to the EF-Ts family.

Its subcellular location is the cytoplasm. Its function is as follows. Associates with the EF-Tu.GDP complex and induces the exchange of GDP to GTP. It remains bound to the aminoacyl-tRNA.EF-Tu.GTP complex up to the GTP hydrolysis stage on the ribosome. The sequence is that of Elongation factor Ts from Clavibacter sepedonicus (Clavibacter michiganensis subsp. sepedonicus).